Consider the following 464-residue polypeptide: Kynureninase 2 (464 aa).

Pyridoxal 5'-phosphate contacts are provided by residues Leu135, Thr136, 163–166 (FPSD), Asp248, His251, and Tyr273. Position 274 is an N6-(pyridoxal phosphate)lysine (Lys274). Pyridoxal 5'-phosphate is bound by residues Trp313 and Asn341.

The protein belongs to the kynureninase family. In terms of assembly, homodimer. Requires pyridoxal 5'-phosphate as cofactor.

The protein resides in the cytoplasm. The enzyme catalyses L-kynurenine + H2O = anthranilate + L-alanine + H(+). It catalyses the reaction 3-hydroxy-L-kynurenine + H2O = 3-hydroxyanthranilate + L-alanine + H(+). Its pathway is amino-acid degradation; L-kynurenine degradation; L-alanine and anthranilate from L-kynurenine: step 1/1. The protein operates within cofactor biosynthesis; NAD(+) biosynthesis; quinolinate from L-kynurenine: step 2/3. Catalyzes the cleavage of L-kynurenine (L-Kyn) and L-3-hydroxykynurenine (L-3OHKyn) into anthranilic acid (AA) and 3-hydroxyanthranilic acid (3-OHAA), respectively. This Aspergillus clavatus (strain ATCC 1007 / CBS 513.65 / DSM 816 / NCTC 3887 / NRRL 1 / QM 1276 / 107) protein is Kynureninase 2 (bna5-2).